The sequence spans 432 residues: Glutamyl-tRNA reductase (432 aa).

Substrate is bound by residues 55–58, serine 113, 118–120, and glutamine 124; these read TCNR and EAQ. The active-site Nucleophile is the cysteine 56. Position 193–198 (193–198) interacts with NADP(+); it reads GAGEMI.

The protein belongs to the glutamyl-tRNA reductase family. As to quaternary structure, homodimer.

The catalysed reaction is (S)-4-amino-5-oxopentanoate + tRNA(Glu) + NADP(+) = L-glutamyl-tRNA(Glu) + NADPH + H(+). Its pathway is porphyrin-containing compound metabolism; protoporphyrin-IX biosynthesis; 5-aminolevulinate from L-glutamyl-tRNA(Glu): step 1/2. Catalyzes the NADPH-dependent reduction of glutamyl-tRNA(Glu) to glutamate 1-semialdehyde (GSA). The polypeptide is Glutamyl-tRNA reductase (Paracidovorax citrulli (strain AAC00-1) (Acidovorax citrulli)).